The primary structure comprises 485 residues: Cysteine--tRNA ligase (485 aa).

Residue Cys-27 coordinates Zn(2+). The 'HIGH' region motif lies at 29–39 (ITAYDLCHIGH). Zn(2+)-binding residues include Cys-208, His-233, and Glu-237. A 'KMSKS' region motif is present at residues 265–269 (KMSKS). Lys-268 contributes to the ATP binding site.

It belongs to the class-I aminoacyl-tRNA synthetase family. In terms of assembly, monomer. Zn(2+) serves as cofactor.

It is found in the cytoplasm. The catalysed reaction is tRNA(Cys) + L-cysteine + ATP = L-cysteinyl-tRNA(Cys) + AMP + diphosphate. This Nitratidesulfovibrio vulgaris (strain DSM 19637 / Miyazaki F) (Desulfovibrio vulgaris) protein is Cysteine--tRNA ligase.